Consider the following 1953-residue polypeptide: Protein BNI1 (1953 aa).

Disordered stretches follow at residues 1–152 (MLKN…ASSL), 230–258 (MRAN…ANSS), 263–282 (KSVL…SNSL), and 287–306 (TLSS…SGSL). Residues 31–40 (ANSNATNSNT) are compositionally biased toward low complexity. Composition is skewed to polar residues over residues 41 to 100 (GSPT…SQYM) and 110 to 143 (VSSQ…RQHT). Residues 174-696 (EMPSDPYEVE…NVSVASTSDE (523 aa)) form the GBD/FH3 domain. Positions 232–246 (ANTTSSSTASRTSMA) are enriched in low complexity. The segment covering 263-278 (KSVLMTSASSPTSTVY) has biased composition (polar residues). Residues serine 311 and serine 325 each carry the phosphoserine modification. Residues 312-337 (LNNIYRGGAENNTSASTLPGDRTNRP) form a disordered region. 3 coiled-coil regions span residues 712–807 (QTDE…TILN), 864–894 (NKRL…EFEK), and 928–981 (NKLN…YKGF). Disordered regions lie at residues 990–1014 (IMDS…SLDP), 1040–1094 (HEIQ…LDAL), and 1149–1330 (TQKV…MPAS). One can recognise an FH1 domain in the interval 1053–1337 (SSSSSDDESE…PASQIKSAVT (285 aa)). 2 positions are modified to phosphoserine: serine 1085 and serine 1170. Basic and acidic residues predominate over residues 1184-1211 (DKAEKDMRQHVENGKQGRVVNHEEDKTA). The segment covering 1217 to 1237 (SKLNNTDGAEDLSTQSSVLSS) has biased composition (polar residues). Pro residues predominate over residues 1238 to 1250 (QPPPPPPPPPPVP). A compositionally biased stretch (basic and acidic residues) spans 1257-1270 (SLEKEKKSEDDTVK). Pro residues predominate over residues 1278-1292 (PAPPPPPPPPPPPPM). 2 positions are modified to phosphoserine: serine 1338 and serine 1344. Residues 1348-1766 (FEKYPRPHKK…YIKHKKIVEE (419 aa)) enclose the FH2 domain. Positions 1732–1811 (KFADFINEYK…DKLLEQLKNA (80 aa)) form a coiled coil. A compositionally biased stretch (basic and acidic residues) spans 1768–1779 (QKRAQEKEKQKE). 3 disordered regions span residues 1768–1797 (QKRA…AEDR), 1809–1844 (KNAG…LLND), and 1872–1899 (PTPL…LEDQ). A DAD domain is found at 1792-1826 (DEAEDRRAVMDKLLEQLKNAGPAKSDPSSARKRAL). A compositionally biased stretch (basic residues) spans 1821 to 1830 (ARKRALVRKK). A compositionally biased stretch (polar residues) spans 1880 to 1896 (VMNTSEDLPSPSKTSAL). Threonine 1918 carries the post-translational modification Phosphothreonine.

Belongs to the formin homology family. BNI1 subfamily. Homodimer, and possibly also homotetramer. Interacts with PFY1 via the FH1 domain and with actin via the FH2 domain.

It localises to the cell membrane. Its subcellular location is the cell projection. The protein localises to the ruffle membrane. It is found in the cytoplasm. The protein resides in the cytoskeleton. Functionally, required for the assembly of F-actin structures, such as actin cables and stress fibers. Nucleates actin filaments. Binds to the barbed end of the actin filament and acts as a leaky capper, slowing both polymerization and depolymerization. Protects the growing actin fiber from tight capping proteins and so increases the time of elongation and the total amount of F-actin. May organize microtubules by mediating spindle positioning and movement in the budding process. Potential target of the RHO family members. The sequence is that of Protein BNI1 (BNI1) from Saccharomyces cerevisiae (strain ATCC 204508 / S288c) (Baker's yeast).